Reading from the N-terminus, the 111-residue chain is Parvalbumin alpha (111 aa).

The residue at position 1 (Thr1) is an N-acetylthreonine; in form C2. EF-hand domains follow at residues 40-75 (KPDDTLKEVFGILDQDKSGYIEEEELKFVLKGFAAG) and 79-111 (LTANETKALLKAGDQDGDDKIGVDEFTNLVKAA). Residues Asp53, Asp55, Ser57, Tyr59, Glu61, Glu64, Asp92, Asp94, Asp96, Lys98, and Glu103 each contribute to the Ca(2+) site.

The protein belongs to the parvalbumin family. Post-translationally, acetylation of Thr-1 converts C1 to C2.

Its function is as follows. In muscle, parvalbumin is thought to be involved in relaxation after contraction. It binds two calcium ions. This chain is Parvalbumin alpha, found in Latimeria chalumnae (Coelacanth).